The chain runs to 220 residues: Elongation factor Ts, chloroplastic (220 aa).

This sequence belongs to the EF-Ts family.

It is found in the plastid. The protein resides in the chloroplast. In terms of biological role, associates with the EF-Tu.GDP complex and induces the exchange of GDP to GTP. It remains bound to the aminoacyl-tRNA.EF-Tu.GTP complex up to the GTP hydrolysis stage on the ribosome. The polypeptide is Elongation factor Ts, chloroplastic (tsf) (Porphyra purpurea (Red seaweed)).